Consider the following 217-residue polypeptide: Thiamine-phosphate synthase (217 aa).

Residues 39-43 (QYRDK) and Asn71 contribute to the 4-amino-2-methyl-5-(diphosphooxymethyl)pyrimidine site. The Mg(2+) site is built by Asp72 and Asp91. Position 110 (Thr110) interacts with 4-amino-2-methyl-5-(diphosphooxymethyl)pyrimidine. 137–139 (SNT) contacts 2-[(2R,5Z)-2-carboxy-4-methylthiazol-5(2H)-ylidene]ethyl phosphate. Lys140 is a 4-amino-2-methyl-5-(diphosphooxymethyl)pyrimidine binding site. Gly167 contributes to the 2-[(2R,5Z)-2-carboxy-4-methylthiazol-5(2H)-ylidene]ethyl phosphate binding site.

The protein belongs to the thiamine-phosphate synthase family. Requires Mg(2+) as cofactor.

The catalysed reaction is 2-[(2R,5Z)-2-carboxy-4-methylthiazol-5(2H)-ylidene]ethyl phosphate + 4-amino-2-methyl-5-(diphosphooxymethyl)pyrimidine + 2 H(+) = thiamine phosphate + CO2 + diphosphate. It carries out the reaction 2-(2-carboxy-4-methylthiazol-5-yl)ethyl phosphate + 4-amino-2-methyl-5-(diphosphooxymethyl)pyrimidine + 2 H(+) = thiamine phosphate + CO2 + diphosphate. The enzyme catalyses 4-methyl-5-(2-phosphooxyethyl)-thiazole + 4-amino-2-methyl-5-(diphosphooxymethyl)pyrimidine + H(+) = thiamine phosphate + diphosphate. Its pathway is cofactor biosynthesis; thiamine diphosphate biosynthesis; thiamine phosphate from 4-amino-2-methyl-5-diphosphomethylpyrimidine and 4-methyl-5-(2-phosphoethyl)-thiazole: step 1/1. Its function is as follows. Condenses 4-methyl-5-(beta-hydroxyethyl)thiazole monophosphate (THZ-P) and 2-methyl-4-amino-5-hydroxymethyl pyrimidine pyrophosphate (HMP-PP) to form thiamine monophosphate (TMP). This is Thiamine-phosphate synthase from Saccharophagus degradans (strain 2-40 / ATCC 43961 / DSM 17024).